The primary structure comprises 256 residues: Extracellular serine-rich protein ARB_03024 (256 aa).

Positions 1-19 are cleaved as a signal peptide; that stretch reads MVATKSVLSAVALAGVAAA. A disordered region spans residues 135-235; sequence KIVPQSGSPT…TPTASPGAAA (101 aa). The segment covering 149 to 159 has biased composition (gly residues); sequence GTLGGSGGSGG. 2 stretches are compositionally biased toward low complexity: residues 160 to 204 and 215 to 235; these read SSSS…QSTP and PSATGSGSHSSTPTASPGAAA. Ala-233 carries the GPI-anchor amidated alanine lipid modification. The propeptide at 234–256 is removed in mature form; it reads AAGLKGSAVLAGVVALGAWIGLL.

The protein localises to the cell membrane. It localises to the secreted. The sequence is that of Extracellular serine-rich protein ARB_03024 from Arthroderma benhamiae (strain ATCC MYA-4681 / CBS 112371) (Trichophyton mentagrophytes).